A 912-amino-acid polypeptide reads, in one-letter code: Translation initiation factor IF-2 (912 aa).

The interval 26 to 297 (SDQGEFVKSA…RGRKSKRAKR (272 aa)) is disordered. Low complexity predominate over residues 56–74 (KPAPAASNGAAAEAAAPPK). Pro residues predominate over residues 100–120 (APEPPAAPAAPAAPAPKPSPA). Low complexity predominate over residues 121–131 (ARPAAAEAAAP). Pro residues-rich tracts occupy residues 132-152 (APAP…PGAP), 173-183 (PRPQAPRPGAP), and 192-218 (NMPP…PGGG). The segment covering 219-283 (PRPGGAGRPG…GAAGAFGRPG (65 aa)) has biased composition (gly residues). Residues 287–296 (KRGRKSKRAK) are compositionally biased toward basic residues. The tr-type G domain occupies 408–579 (TRPPVVTVMG…AVLLTADAAL (172 aa)). The interval 417–424 (GHVDHGKT) is G1. Residue 417–424 (GHVDHGKT) participates in GTP binding. A G2 region spans residues 442-446 (GITQH). Residues 467–470 (DTPG) form a G3 region. GTP is bound by residues 467 to 471 (DTPGH) and 521 to 524 (NKID). The G4 stretch occupies residues 521 to 524 (NKID). The segment at 557–559 (SAR) is G5.

The protein belongs to the TRAFAC class translation factor GTPase superfamily. Classic translation factor GTPase family. IF-2 subfamily.

Its subcellular location is the cytoplasm. Its function is as follows. One of the essential components for the initiation of protein synthesis. Protects formylmethionyl-tRNA from spontaneous hydrolysis and promotes its binding to the 30S ribosomal subunits. Also involved in the hydrolysis of GTP during the formation of the 70S ribosomal complex. The protein is Translation initiation factor IF-2 of Mycobacteroides abscessus (strain ATCC 19977 / DSM 44196 / CCUG 20993 / CIP 104536 / JCM 13569 / NCTC 13031 / TMC 1543 / L948) (Mycobacterium abscessus).